The following is a 275-amino-acid chain: Octanoyl-[GcvH]:protein N-octanoyltransferase (275 aa).

One can recognise a BPL/LPL catalytic domain in the interval 42 to 246; that stretch reads GQSQPVVRLW…ALQAFGSRLE (205 aa). The active-site Acyl-thioester intermediate is the cysteine 145.

Belongs to the octanoyltransferase LipL family.

It carries out the reaction N(6)-octanoyl-L-lysyl-[glycine-cleavage complex H protein] + L-lysyl-[lipoyl-carrier protein] = N(6)-octanoyl-L-lysyl-[lipoyl-carrier protein] + L-lysyl-[glycine-cleavage complex H protein]. Its pathway is protein modification; protein lipoylation via endogenous pathway; protein N(6)-(lipoyl)lysine from octanoyl-[acyl-carrier-protein]. Functionally, catalyzes the amidotransfer (transamidation) of the octanoyl moiety from octanoyl-GcvH to the lipoyl domain of the E2 subunit of lipoate-dependent enzymes. This is Octanoyl-[GcvH]:protein N-octanoyltransferase from Anoxybacillus flavithermus (strain DSM 21510 / WK1).